The following is a 434-amino-acid chain: D-amino acid dehydrogenase (434 aa).

3-17 provides a ligand contact to FAD; sequence VLVLGSGVIGTTSAW.

This sequence belongs to the DadA oxidoreductase family. The cofactor is FAD.

The catalysed reaction is a D-alpha-amino acid + A + H2O = a 2-oxocarboxylate + AH2 + NH4(+). The protein operates within amino-acid degradation; D-alanine degradation; NH(3) and pyruvate from D-alanine: step 1/1. Its function is as follows. Oxidative deamination of D-amino acids. The chain is D-amino acid dehydrogenase from Stenotrophomonas maltophilia (strain R551-3).